Consider the following 1378-residue polypeptide: Disease resistance protein RRS1 (1378 aa).

The TIR domain occupies 5 to 146 (EKDEEFVCIS…EIVRDVYETH (142 aa)). The NB-ARC domain maps to 170 to 421 (IGIRCVGIWG…LLEGCGFFPH (252 aa)). 179–186 (GMPGIGKT) contributes to the ATP binding site. 9 LRR repeats span residues 498–522 (SEEIEGLFLDTSNLRFDLQPSAFKN), 535–553 (NPEVHPVINFPTGSLHSLP), 554–575 (NELRLLHWENYPLKSLPQNFDP), 577–598 (HLVEINMPYSQLQKLWGGTKNL), 621–646 (AENLEVIDLQGCTRLQNFPAAGRLLR), 665–688 (PPNIEKLHLQGTGILALPVSTVKP), 742–766 (LPNMANLDLNVLDLSGCSSLNSIQG), 768–793 (PRFLKQLYLGGTAIREVPQLPQSLEI), and 831–854 (PRNLKELYFAGTTLREVPQLPLSL). Residues 988–1005 (RNFHCWAPGKVVPKVRKD) carry the Nuclear localization signal motif. The WRKY DNA-binding region spans 1204 to 1272 (IPAIDEGDLW…YLSEHNHPRP (69 aa)). The disordered stretch occupies residues 1300–1321 (RVFQNKDEPNQPHLPSSSTPPR).

In terms of assembly, interacts with PopP2, a R.solanacearum type III effector.

It is found in the nucleus. The protein resides in the cytoplasm. Functionally, transcription factor. Interacts specifically with the W box (5'-(T)TGAC[CT]-3'), a frequently occurring elicitor-responsive cis-acting element. Also acts as a disease resistance protein involved in resistance to fungal and bacterial pathogens, including R.solanacearum, P.syringae pv. tomato and C.higginsianum. RRS1 mediated resistance depends on salicylic acid and NDR1 (AC O48915). This chain is Disease resistance protein RRS1, found in Arabidopsis thaliana (Mouse-ear cress).